The following is a 203-amino-acid chain: N-(5'-phosphoribosyl)anthranilate isomerase (203 aa).

The protein belongs to the TrpF family.

It catalyses the reaction N-(5-phospho-beta-D-ribosyl)anthranilate = 1-(2-carboxyphenylamino)-1-deoxy-D-ribulose 5-phosphate. The protein operates within amino-acid biosynthesis; L-tryptophan biosynthesis; L-tryptophan from chorismate: step 3/5. This is N-(5'-phosphoribosyl)anthranilate isomerase from Thermoanaerobacter pseudethanolicus (strain ATCC 33223 / 39E) (Clostridium thermohydrosulfuricum).